The sequence spans 213 residues: Large ribosomal subunit protein uL1 (213 aa).

Belongs to the universal ribosomal protein uL1 family. As to quaternary structure, part of the 50S ribosomal subunit.

Binds directly to 23S rRNA. Probably involved in E site tRNA release. Its function is as follows. Protein L1 is also a translational repressor protein, it controls the translation of its operon by binding to its mRNA. The protein is Large ribosomal subunit protein uL1 of Methanocella arvoryzae (strain DSM 22066 / NBRC 105507 / MRE50).